The sequence spans 360 residues: D-alanine--D-alanine ligase (360 aa).

One can recognise an ATP-grasp domain in the interval 146–352; the sequence is KLCAVQAGIH…FTELIDRLVR (207 aa). 179–234 provides a ligand contact to ATP; the sequence is KKRFAPPFFVKPANLGSSVGIAKIHSFDELENALDEACRLDVKILVEKAIEGREVE. Residues Asp305, Glu319, and Asn321 each coordinate Mg(2+).

The protein belongs to the D-alanine--D-alanine ligase family. Requires Mg(2+) as cofactor. Mn(2+) serves as cofactor.

The protein resides in the cytoplasm. It carries out the reaction 2 D-alanine + ATP = D-alanyl-D-alanine + ADP + phosphate + H(+). The protein operates within cell wall biogenesis; peptidoglycan biosynthesis. Functionally, cell wall formation. This is D-alanine--D-alanine ligase from Chlorobium phaeobacteroides (strain BS1).